The chain runs to 172 residues: Shikimate kinase (172 aa).

Residue G11 to T16 participates in ATP binding. S15 contributes to the Mg(2+) binding site. 3 residues coordinate substrate: D33, R57, and G79. Residue R117 coordinates ATP. R136 provides a ligand contact to substrate. Residue R153 coordinates ATP.

Belongs to the shikimate kinase family. In terms of assembly, monomer. Mg(2+) is required as a cofactor.

The protein localises to the cytoplasm. The catalysed reaction is shikimate + ATP = 3-phosphoshikimate + ADP + H(+). Its pathway is metabolic intermediate biosynthesis; chorismate biosynthesis; chorismate from D-erythrose 4-phosphate and phosphoenolpyruvate: step 5/7. Its function is as follows. Catalyzes the specific phosphorylation of the 3-hydroxyl group of shikimic acid using ATP as a cosubstrate. The polypeptide is Shikimate kinase (Pseudomonas putida (strain ATCC 700007 / DSM 6899 / JCM 31910 / BCRC 17059 / LMG 24140 / F1)).